The following is a 98-amino-acid chain: TTCTSTQQTAAYVTLVSILSDSSFNQCATDSGYSMLTATALPTTAQYKLMCASTACNTMINKIVTLNPPDCELTVPTSGLVLNVYSYANGFSATCASL.

3 cysteine pairs are disulfide-bonded: C3-C71, C27-C56, and C51-C95.

The protein belongs to the elicitin family.

The protein localises to the secreted. In terms of biological role, induces local and distal defense responses (incompatible hypersensitive reaction) in plants from the solanaceae and cruciferae families. Elicits leaf necrosis and causes the accumulation of pathogenesis-related proteins. Might interact with the lipidic molecules of the plasma membrane. This chain is Alpha-elicitin MGM-alpha, found in Phytophthora megasperma (Potato pink rot fungus).